A 70-amino-acid chain; its full sequence is Beta sliding clamp (70 aa).

Belongs to the beta sliding clamp family. Forms a ring-shaped head-to-tail homodimer around DNA which binds and tethers DNA polymerases and other proteins to the DNA. The DNA replisome complex has a single clamp-loading complex (3 tau and 1 each of delta, delta', psi and chi subunits) which binds 3 Pol III cores (1 core on the leading strand and 2 on the lagging strand) each with a beta sliding clamp dimer. Additional proteins in the replisome are other copies of gamma, psi and chi, Ssb, DNA helicase and RNA primase.

It is found in the cytoplasm. Its function is as follows. Confers DNA tethering and processivity to DNA polymerases and other proteins. Acts as a clamp, forming a ring around DNA (a reaction catalyzed by the clamp-loading complex) which diffuses in an ATP-independent manner freely and bidirectionally along dsDNA. Initially characterized for its ability to contact the catalytic subunit of DNA polymerase III (Pol III), a complex, multichain enzyme responsible for most of the replicative synthesis in bacteria; Pol III exhibits 3'-5' exonuclease proofreading activity. The beta chain is required for initiation of replication as well as for processivity of DNA replication. This chain is Beta sliding clamp (dnaN), found in Rhodobacter capsulatus (Rhodopseudomonas capsulata).